Reading from the N-terminus, the 139-residue chain is Large ribosomal subunit protein uL16 (139 aa).

The protein belongs to the universal ribosomal protein uL16 family. As to quaternary structure, part of the 50S ribosomal subunit.

Its function is as follows. Binds 23S rRNA and is also seen to make contacts with the A and possibly P site tRNAs. The chain is Large ribosomal subunit protein uL16 from Chlorobium chlorochromatii (strain CaD3).